The following is a 411-amino-acid chain: Anthranilate synthase component 1 (411 aa).

Residues S27 and 203–205 (PYM) contribute to the L-tryptophan site. 237-238 (GT) is a chorismate binding site. E262 provides a ligand contact to Mg(2+). Chorismate contacts are provided by residues Y350, R369, 382–384 (GAG), and G384. E397 serves as a coordination point for Mg(2+).

The protein belongs to the anthranilate synthase component I family. As to quaternary structure, heterotetramer consisting of two non-identical subunits: a beta subunit (TrpG) and a large alpha subunit (TrpE). It depends on Mg(2+) as a cofactor.

The catalysed reaction is chorismate + L-glutamine = anthranilate + pyruvate + L-glutamate + H(+). It functions in the pathway amino-acid biosynthesis; L-tryptophan biosynthesis; L-tryptophan from chorismate: step 1/5. Its activity is regulated as follows. Feedback inhibited by tryptophan. Functionally, part of a heterotetrameric complex that catalyzes the two-step biosynthesis of anthranilate, an intermediate in the biosynthesis of L-tryptophan. In the first step, the glutamine-binding beta subunit (TrpG) of anthranilate synthase (AS) provides the glutamine amidotransferase activity which generates ammonia as a substrate that, along with chorismate, is used in the second step, catalyzed by the large alpha subunit of AS (TrpE) to produce anthranilate. In the absence of TrpG, TrpE can synthesize anthranilate directly from chorismate and high concentrations of ammonia. The chain is Anthranilate synthase component 1 (trpE) from Archaeoglobus fulgidus (strain ATCC 49558 / DSM 4304 / JCM 9628 / NBRC 100126 / VC-16).